A 294-amino-acid polypeptide reads, in one-letter code: Metallophosphoesterase MPPED2 (294 aa).

Mn(2+) contacts are provided by Asp-65, His-67, Asp-86, Asn-117, and His-213. Residue 117-118 (NH) coordinates GMP. GMP contacts are provided by residues 225-226 (KE) and 254-255 (HE). Residue His-254 participates in Mn(2+) binding.

This sequence belongs to the UPF0046 family. As to quaternary structure, homodimer. The cofactor is Mn(2+). Co(2+) serves as cofactor. Expressed in fetal brain (at protein level). detected in fetal and adult brain.

Inhibited by nmolar levels of AMP and GMP. Displays low metallophosphoesterase activity (in vitro). May play a role in the development of the nervous system. The sequence is that of Metallophosphoesterase MPPED2 (Mpped2) from Rattus norvegicus (Rat).